The primary structure comprises 226 residues: Phosphoribosylformylglycinamidine synthase subunit PurQ (226 aa).

Residues 2–226 (KIAVIVFPGS…LENGTVIAEG (225 aa)) form the Glutamine amidotransferase type-1 domain. The active-site Nucleophile is the cysteine 86. Residues histidine 195 and glutamate 197 contribute to the active site.

Part of the FGAM synthase complex composed of 1 PurL, 1 PurQ and 2 PurS subunits.

The protein resides in the cytoplasm. The enzyme catalyses N(2)-formyl-N(1)-(5-phospho-beta-D-ribosyl)glycinamide + L-glutamine + ATP + H2O = 2-formamido-N(1)-(5-O-phospho-beta-D-ribosyl)acetamidine + L-glutamate + ADP + phosphate + H(+). It catalyses the reaction L-glutamine + H2O = L-glutamate + NH4(+). It functions in the pathway purine metabolism; IMP biosynthesis via de novo pathway; 5-amino-1-(5-phospho-D-ribosyl)imidazole from N(2)-formyl-N(1)-(5-phospho-D-ribosyl)glycinamide: step 1/2. Its function is as follows. Part of the phosphoribosylformylglycinamidine synthase complex involved in the purines biosynthetic pathway. Catalyzes the ATP-dependent conversion of formylglycinamide ribonucleotide (FGAR) and glutamine to yield formylglycinamidine ribonucleotide (FGAM) and glutamate. The FGAM synthase complex is composed of three subunits. PurQ produces an ammonia molecule by converting glutamine to glutamate. PurL transfers the ammonia molecule to FGAR to form FGAM in an ATP-dependent manner. PurS interacts with PurQ and PurL and is thought to assist in the transfer of the ammonia molecule from PurQ to PurL. This is Phosphoribosylformylglycinamidine synthase subunit PurQ from Limosilactobacillus fermentum (strain NBRC 3956 / LMG 18251) (Lactobacillus fermentum).